Here is a 169-residue protein sequence, read N- to C-terminus: Peptide deformylase (169 aa).

Residues Cys94 and His136 each coordinate Fe cation. Glu137 is a catalytic residue. His140 is a Fe cation binding site.

This sequence belongs to the polypeptide deformylase family. It depends on Fe(2+) as a cofactor.

The enzyme catalyses N-terminal N-formyl-L-methionyl-[peptide] + H2O = N-terminal L-methionyl-[peptide] + formate. Its function is as follows. Removes the formyl group from the N-terminal Met of newly synthesized proteins. Requires at least a dipeptide for an efficient rate of reaction. N-terminal L-methionine is a prerequisite for activity but the enzyme has broad specificity at other positions. In Phenylobacterium zucineum (strain HLK1), this protein is Peptide deformylase.